Reading from the N-terminus, the 475-residue chain is Glutamate--tRNA ligase (475 aa).

The 'HIGH' region motif lies at 9–19 (PSPTGYLHVGG). The short motif at 240–244 (KLSKR) is the 'KMSKS' region element. Lys-243 serves as a coordination point for ATP.

It belongs to the class-I aminoacyl-tRNA synthetase family. Glutamate--tRNA ligase type 1 subfamily. Monomer.

The protein localises to the cytoplasm. The enzyme catalyses tRNA(Glu) + L-glutamate + ATP = L-glutamyl-tRNA(Glu) + AMP + diphosphate. In terms of biological role, catalyzes the attachment of glutamate to tRNA(Glu) in a two-step reaction: glutamate is first activated by ATP to form Glu-AMP and then transferred to the acceptor end of tRNA(Glu). This is Glutamate--tRNA ligase from Vibrio campbellii (strain ATCC BAA-1116).